We begin with the raw amino-acid sequence, 902 residues long: Chloride channel protein 2 (902 aa).

At 1-89 (MAASAAAAGE…RCHKFLVSRV (89 aa)) the chain is on the cytoplasmic side. Positions 18 to 36 (QYEQTLMYGRYTQELGAFA) are essential for channel gating by both voltage and cell volume. The residue at position 22 (Thr22) is a Phosphothreonine. Residues 38–51 (EEAARIRLGGPEPW) are modulates channel gating by both voltage and cell volume. The next 2 membrane-spanning stretches (helical) occupy residues 90 to 123 (GEDW…AQQW) and 132 to 157 (ILLQ…TQIL). The Selectivity filter part_1 motif lies at 163 to 167 (GSGIP). The helical intramembrane region spans 166–173 (IPEMKTIL). 2 helical membrane passes run 182 to 200 (LTLK…ALGS) and 207 to 225 (EGPF…SKFL). Positions 205 to 209 (GKEGP) match the Selectivity filter part_2 motif. Intramembrane regions (helical) lie at residues 241–253 (MLAA…VGCC) and 257–265 (PIGGVLFSI). 5 helical membrane-spanning segments follow: residues 277-297 (YWRG…LAVW), 323-351 (LPAF…VQVM), 360-379 (FLMR…ISTL), 431-451 (ANVF…SALA), and 459-482 (GAFM…MAAW). The Selectivity filter part_3 motif lies at 459 to 463 (GAFMP). Residues 499-513 (GGYAVVGAAALAGAV) constitute an intramembrane region (helical). An intramembrane region (note=Loop between two helices) is located at residues 514-515 (TH). An intramembrane region (helical) is located at residues 516-527 (TVSTAVIVFELT). Residues 528–532 (GQIAH) constitute an intramembrane region (note=Loop between two helices). The chain crosses the membrane as a helical span at residues 533–550 (ILPVMIAVILANAVAQSL). Topologically, residues 551–902 (QPSLYDSIIR…SPSDSDDKCQ (352 aa)) are cytoplasmic. In terms of domain architecture, CBS 1 spans 586–644 (MVRDVPYVALNCTFRDLRLALHRTKGRMLALVESSESMILLGSIERSQVVTLLGAQLSA). The interval 648–748 (RQHIQERRKA…TSDLEKPESC (101 aa)) is disordered. Polar residues-rich tracts occupy residues 671-683 (PESS…NTED) and 706-719 (SNAS…TGSM). In terms of domain architecture, CBS 2 spans 794 to 854 (IDPAPFQLVE…GSVTAQGVKV (61 aa)). The short motif at 816-817 (LL) is the Basolateral membrane sorting element. Residues 860-902 (SFRDSATSSSDTETTEVHALWGPHSCHGLPRDGSPSDSDDKCQ) form a disordered region.

This sequence belongs to the chloride channel (TC 2.A.49) family. ClC-2/CLCN2 subfamily. Homodimer. Interacts with auxiliary subunit HEPACAM.

It localises to the cell membrane. Its subcellular location is the basolateral cell membrane. The protein localises to the cell projection. The protein resides in the dendritic spine membrane. It is found in the axon. The enzyme catalyses chloride(in) = chloride(out). The catalysed reaction is thiocyanate(in) = thiocyanate(out). It catalyses the reaction bromide(in) = bromide(out). It carries out the reaction nitrate(in) = nitrate(out). The enzyme catalyses iodide(out) = iodide(in). With respect to regulation, common gate kinetics are down-regulated by intracellular ATP. Inhibited by AK-42, a derivative of meclofenamate. Inhibited by Cd(2+). Inhibited by Zn(2+) and PKC activation. Inhibited at acidic pH. CCLN2:HEPACAM channel conductance is up-regulated upon hypo-osmolarity. Its function is as follows. Voltage-gated and osmosensitive chloride channel. Forms a homodimeric channel where each subunit has its own ion conduction pathway. Conducts double-barreled currents controlled by two types of gates, two fast glutamate gates that control each subunit independently and a slow common gate that opens and shuts off both subunits simultaneously. Displays inward rectification currents activated upon membrane hyperpolarization and extracellular hypotonicity. Contributes to chloride conductance involved in neuron excitability. In hippocampal neurons, generates a significant part of resting membrane conductance and provides an additional chloride efflux pathway to prevent chloride accumulation in dendrites upon GABA receptor activation. In glia, associates with the auxiliary subunit HEPACAM/GlialCAM at astrocytic processes and myelinated fiber tracts where it may regulate transcellular chloride flux buffering extracellular chloride and potassium concentrations. Regulates aldosterone production in adrenal glands. The opening of CLCN2 channels at hyperpolarized membrane potentials in the glomerulosa causes cell membrane depolarization, activation of voltage-gated calcium channels and increased expression of aldosterone synthase, the rate-limiting enzyme for aldosterone biosynthesis. Contributes to chloride conductance in retinal pigment epithelium involved in phagocytosis of shed photoreceptor outer segments and photoreceptor renewal. Conducts chloride currents at the basolateral membrane of epithelial cells with a role in chloride reabsorption rather than secretion. Permeable to small monovalent anions with chloride &gt; thiocyanate &gt; bromide &gt; nitrate &gt; iodide ion selectivity. The sequence is that of Chloride channel protein 2 (CLCN2) from Cavia porcellus (Guinea pig).